An 802-amino-acid polypeptide reads, in one-letter code: Epithelial sodium channel subunit delta (802 aa).

Over 1–250 the chain is Cytoplasmic; it reads MRAVLSQKTT…CSRGNRLKTT (250 aa). The disordered stretch occupies residues 145–211; that stretch reads KQPHGGALTS…PPPPKEGHQE (67 aa). The span at 166–176 shows a compositional bias: basic residues; that stretch reads CHLKGWQHRPT. The span at 192–205 shows a compositional bias: pro residues; it reads PPRPGPPSAPPPPP. A helical transmembrane segment spans residues 251-271; sequence SWGLLSLGALVALCWQLGLLF. The Extracellular segment spans residues 272–694; sequence ERHWHRPVLM…VPQLLSAMGS (423 aa). N-linked (GlcNAc...) asparagine glycosylation is found at Asn-330 and Asn-548. Residues 695-715 form a helical membrane-spanning segment; that stretch reads LCSLWFGASVLSLLELLELLL. Residues 716–802 are Cytoplasmic-facing; that stretch reads DASALTLVLG…GPQPLETLDT (87 aa). Positions 738-777 are disordered; that stretch reads RASPASGASSIKPEASQMPPPAGGTSDDPEPSGPHLPRVM.

The protein belongs to the amiloride-sensitive sodium channel (TC 1.A.6) family. SCNN1D subfamily. As to quaternary structure, can form an alternative heterotrimeric epithelial sodium channel (ENaC), composed of a delta (SCNN1D), beta (SCNN1B), and gamma (SCNN1G) subunit, where the delta (SCNN1D) subunit replaces the alpha (SCNN1A) subunit. Not specifically expressed in epithelial cells.

It is found in the apical cell membrane. It carries out the reaction Na(+)(in) = Na(+)(out). With respect to regulation, originally identified and characterized by its inhibition by the diuretic drug amiloride. Potential alternative pore-forming subunit of the epithelial sodium channel (ENaC), capable of replacing the alpha/SCNN1A subunit, creating a more active channel with distinct properties. ENaC functions in epithelial tissues, where it facilitates the electrodiffusion of sodium ions from the extracellular fluid through the apical membrane of cells, with water following osmotically, regulating sodium balance and fluid homeostasis. This subunit could also function independently as a sodium channel or assemble into other tissue-specific heterotrimeric sodium channels. Functionally, ENaC channels including this isoform exhibit greater conductance. The chain is Epithelial sodium channel subunit delta from Homo sapiens (Human).